We begin with the raw amino-acid sequence, 218 residues long: DNA-directed RNA polymerase III subunit RPC7-like (218 aa).

Positions 133-218 (LPKRPPKTTE…SDDNMDEAIY (86 aa)) are disordered. A compositionally biased stretch (basic and acidic residues) spans 139 to 160 (KTTEDKEETIQKLETLEKKEEE). 2 stretches are compositionally biased toward acidic residues: residues 161–193 (VTSE…EETD) and 201–218 (NGED…EAIY).

This sequence belongs to the eukaryotic RPC7 RNA polymerase subunit family. Component of the RNA polymerase III (Pol III) complex consisting of 17 subunits. Pol III exists as two alternative complexes defined by the mutually exclusive incorporation of subunit POLR3G/RPC7alpha or POLR3GL/RPC7beta. Found in a trimeric complex with POLR3C/RPC3 and POLR3F/RPC6. Directly interacts with POLR3C. Widely expressed. Expressed in CD4-positive T cells.

It is found in the nucleus. DNA-dependent RNA polymerase catalyzes the transcription of DNA into RNA using the four ribonucleoside triphosphates as substrates. Specific peripheric component of RNA polymerase III which synthesizes small RNAs, such as 5S rRNA and tRNAs. This chain is DNA-directed RNA polymerase III subunit RPC7-like, found in Homo sapiens (Human).